The following is a 276-amino-acid chain: Rho-related protein racO (276 aa).

Position 11–18 (Gly-11–Thr-18) interacts with GTP. The Effector region motif lies at Tyr-34–Leu-42. GTP is bound by residues Glu-60 to Phe-64 and Ile-124 to Asp-127. A disordered region spans residues Phe-199 to Ser-276. Residues Lys-200–Thr-270 show a composition bias toward low complexity. Cys-273 carries the post-translational modification Cysteine methyl ester. Cys-273 carries S-geranylgeranyl cysteine lipidation. A propeptide spans Lys-274–Ser-276 (removed in mature form).

It belongs to the small GTPase superfamily. Rho family.

Its subcellular location is the cell membrane. This is Rho-related protein racO (racO) from Dictyostelium discoideum (Social amoeba).